Here is a 196-residue protein sequence, read N- to C-terminus: HTH-type transcriptional regulator BetI (196 aa).

Residues 8-68 (EVRRAQLIDA…ATMRHILRDL (61 aa)) enclose the HTH tetR-type domain. A DNA-binding region (H-T-H motif) is located at residues 31 to 50 (TLASVAQRANISTGIVSHYF).

It functions in the pathway amine and polyamine biosynthesis; betaine biosynthesis via choline pathway [regulation]. Functionally, repressor involved in the biosynthesis of the osmoprotectant glycine betaine. It represses transcription of the choline transporter BetT and the genes of BetAB involved in the synthesis of glycine betaine. The polypeptide is HTH-type transcriptional regulator BetI (Paraburkholderia phymatum (strain DSM 17167 / CIP 108236 / LMG 21445 / STM815) (Burkholderia phymatum)).